The primary structure comprises 411 residues: Arginase (411 aa).

The interval asparagine 83 to asparagine 106 is disordered. Mn(2+) is bound by residues histidine 193, aspartate 216, histidine 218, and aspartate 220. L-arginine-binding residues include asparagine 222, serine 229, and aspartate 274. Residues aspartate 323 and aspartate 325 each coordinate Mn(2+).

It belongs to the arginase family. In terms of assembly, homotrimer; oligomerization is dependent on Mn(2+) binding. Mn(2+) serves as cofactor.

The enzyme catalyses L-arginine + H2O = urea + L-ornithine. Its pathway is nitrogen metabolism; urea cycle; L-ornithine and urea from L-arginine: step 1/1. Feedback inhibition by product L-ornithine,. Inhibited by 2(S)-amino-6-boronohexanoic acid (ABH); however, with less efficiency than human ARG1. Catalyzes the hydrolysis of L-arginine into urea and L-ornithine, which is a precursor for polyamine biosynthesis. May play a role in parasite intra-hepatic development during the host liver stage. The sequence is that of Arginase from Plasmodium falciparum (isolate 3D7).